The following is a 137-amino-acid chain: 6,7-dimethyl-8-ribityllumazine synthase (137 aa).

5-amino-6-(D-ribitylamino)uracil is bound by residues phenylalanine 11, 43–45 (SFD), and 67–69 (CVI). 72-73 (DT) is a (2S)-2-hydroxy-3-oxobutyl phosphate binding site. Histidine 75 serves as the catalytic Proton donor. Leucine 100 is a binding site for 5-amino-6-(D-ribitylamino)uracil. Arginine 115 provides a ligand contact to (2S)-2-hydroxy-3-oxobutyl phosphate.

This sequence belongs to the DMRL synthase family. In terms of assembly, forms an icosahedral capsid composed of 60 subunits, arranged as a dodecamer of pentamers.

The catalysed reaction is (2S)-2-hydroxy-3-oxobutyl phosphate + 5-amino-6-(D-ribitylamino)uracil = 6,7-dimethyl-8-(1-D-ribityl)lumazine + phosphate + 2 H2O + H(+). It functions in the pathway cofactor biosynthesis; riboflavin biosynthesis; riboflavin from 2-hydroxy-3-oxobutyl phosphate and 5-amino-6-(D-ribitylamino)uracil: step 1/2. Its function is as follows. Catalyzes the formation of 6,7-dimethyl-8-ribityllumazine by condensation of 5-amino-6-(D-ribitylamino)uracil with 3,4-dihydroxy-2-butanone 4-phosphate. This is the penultimate step in the biosynthesis of riboflavin. This is 6,7-dimethyl-8-ribityllumazine synthase from Methanococcus maripaludis (strain DSM 14266 / JCM 13030 / NBRC 101832 / S2 / LL).